Consider the following 442-residue polypeptide: 2-oxoisovalerate dehydrogenase subunit alpha, mitochondrial (442 aa).

Residues 1–42 (MSAAKIWRPSRGLRQAALLLLGRSGVRGLARSHPSRQQQQQF) constitute a mitochondrion transit peptide. The segment at 30-50 (ARSHPSRQQQQQFPSLDDKPQ) is disordered. Thiamine diphosphate contacts are provided by Tyr-155 and Arg-156. Ser-203 is a binding site for K(+). Ser-204 lines the thiamine diphosphate pocket. K(+) contacts are provided by Pro-205, Thr-208, and Gln-209. Glu-235 is a Mg(2+) binding site. Gly-236, Ala-237, and Arg-262 together coordinate thiamine diphosphate. The Mg(2+) site is built by Asn-264 and Tyr-266. Position 333 (His-333) interacts with thiamine diphosphate. Phosphoserine; by BCKDK is present on Ser-334. Thr-335 carries the post-translational modification Phosphothreonine. Ser-336 and Ser-344 each carry phosphoserine. Lys-353 is modified (N6-acetyllysine; alternate). Lys-353 carries the post-translational modification N6-succinyllysine; alternate. At Lys-377 the chain carries N6-succinyllysine.

It belongs to the BCKDHA family. In terms of assembly, heterotetramer of 2 alpha/BCKDHA and 2 beta chains/BCKDHB that forms the branched-chain alpha-keto acid decarboxylase (E1) component of the BCKD complex. The branched-chain alpha-ketoacid dehydrogenase is a large complex composed of three major building blocks E1, E2 and E3. It is organized around E2, a 24-meric cubic core composed of DBT, to which are associated 6 to 12 copies of E1, and approximately 6 copies of the dehydrogenase E3, a DLD dimer. Interacts with PPM1K. It depends on thiamine diphosphate as a cofactor. Mg(2+) is required as a cofactor. Post-translationally, phosphorylated at Ser-334 by BCKDK and dephosphorylated by protein phosphatase PPM1K.

The protein localises to the mitochondrion matrix. It carries out the reaction N(6)-[(R)-lipoyl]-L-lysyl-[protein] + 3-methyl-2-oxobutanoate + H(+) = N(6)-[(R)-S(8)-2-methylpropanoyldihydrolipoyl]-L-lysyl-[protein] + CO2. Functionally, together with BCKDHB forms the heterotetrameric E1 subunit of the mitochondrial branched-chain alpha-ketoacid dehydrogenase (BCKD) complex. The BCKD complex catalyzes the multi-step oxidative decarboxylation of alpha-ketoacids derived from the branched-chain amino-acids valine, leucine and isoleucine producing CO2 and acyl-CoA which is subsequently utilized to produce energy. The E1 subunit catalyzes the first step with the decarboxylation of the alpha-ketoacid forming an enzyme-product intermediate. A reductive acylation mediated by the lipoylamide cofactor of E2 extracts the acyl group from the E1 active site for the next step of the reaction. The protein is 2-oxoisovalerate dehydrogenase subunit alpha, mitochondrial of Mus musculus (Mouse).